The following is a 709-amino-acid chain: Protein white (709 aa).

The disordered stretch occupies residues 1 to 35 (MTINTDDQYADGESKTTISSNRRYSTSSFQDQSME). Residues 15 to 32 (KTTISSNRRYSTSSFQDQ) show a composition bias toward polar residues. In terms of domain architecture, ABC transporter spans 103-348 (FTRQRLVKDF…SQLGIPCPPN (246 aa)). ATP is bound by residues 136-143 (GSSGAGKT) and 292-299 (GMAMKGKT). A helical transmembrane segment spans residues 457-475 (LLQTAMVASLIGSIYFGQV). The N-linked (GlcNAc...) asparagine glycan is linked to asparagine 485. Helical transmembrane passes span 487–507 (SLFL…INVF), 537–555 (LPLF…YPMI), 564–585 (YLTT…GYLI), and 598–616 (VGPP…FLNS). An N-linked (GlcNAc...) asparagine glycan is attached at asparagine 658. Residues 681 to 700 (LDIGCLFALIVLFRLGALFC) form a helical membrane-spanning segment.

The protein belongs to the ABC transporter superfamily. ABCG family. Eye pigment precursor importer (TC 3.A.1.204) subfamily.

It is found in the membrane. Its function is as follows. May be part of a membrane-spanning permease system necessary for the transport of pigment precursors into pigment cells responsible for eye color. In Anopheles albimanus (New world malaria mosquito), this protein is Protein white (W).